Reading from the N-terminus, the 252-residue chain is Chitooligosaccharide deacetylase (252 aa).

Mg(2+) contacts are provided by histidine 61 and histidine 125.

This sequence belongs to the YdjC deacetylase family. ChbG subfamily. In terms of assembly, homodimer. Mg(2+) is required as a cofactor.

It localises to the cytoplasm. It carries out the reaction N,N'-diacetylchitobiose + H2O = N-acetyl-beta-D-glucosaminyl-(1-&gt;4)-D-glucosamine + acetate. The enzyme catalyses diacetylchitobiose-6'-phosphate + H2O = N'-monoacetylchitobiose-6'-phosphate + acetate. Its pathway is glycan degradation; chitin degradation. Functionally, involved in the degradation of chitin. ChbG is essential for growth on the acetylated chitooligosaccharides chitobiose and chitotriose but is dispensable for growth on cellobiose and chitosan dimer, the deacetylated form of chitobiose. Deacetylation of chitobiose-6-P and chitotriose-6-P is necessary for both the activation of the chb promoter by the regulatory protein ChbR and the hydrolysis of phosphorylated beta-glucosides by the phospho-beta-glucosidase ChbF. Catalyzes the removal of only one acetyl group from chitobiose-6-P to yield monoacetylchitobiose-6-P, the inducer of ChbR and the substrate of ChbF. The sequence is that of Chitooligosaccharide deacetylase from Escherichia coli O45:K1 (strain S88 / ExPEC).